The chain runs to 718 residues: Tegument protein UL46 (718 aa).

Disordered regions lie at residues 433 to 510 (SAGP…EPPA) and 581 to 611 (TADD…DDES). Gly residues predominate over residues 444-454 (GPGGHRAGGGT). Residues 455–467 (CREKIQRARRDNE) show a composition bias toward basic and acidic residues.

This sequence belongs to the herpesviridae HHV-1 VP11/12 protein family. As to quaternary structure, interacts with VP16. Interacts with host LCK, PIK3R1, SHC1 AND GRB2; these interactions promote the activation of the PI3K/AKT pathway. Interacts with host YWHAB. Interacts with ICP0; this interaction targets UL46 for degradation by the proteasome. Interacts (via N-terminus) with host TMEM173. Interacts (via C-terminus) with host TBK1. Interacts with host DOK2. In terms of processing, phosphorylated by host LCK. The phosphorylation seems to be lymphocyte-specific.

The protein resides in the virion tegument. It is found in the host cytoplasm. The protein localises to the host cell membrane. Its function is as follows. Plays a role in the activation of the host PI3K/AKT pathway to promote cell survival. Interacts with and activates host LCK and thereby recruits downstream partners SHC1, GRB2 and PI3KR1 in order to activate the PI3K pathway by phosphorylating host AKT on its activating residues. This mechanism is inhibited by the viral protein US3 that instead promotes incorporation of UL46 into virions. Plays a role in the inhibition of TMEM173/STING-mediated type I interferon production. Interacts with host DOK2 and induces its degradation. This immune evasion mechanism to inactivate T-cells may play an important role during pathogenesis. The sequence is that of Tegument protein UL46 from Homo sapiens (Human).